The following is a 986-amino-acid chain: MKVVNLKQAILQAWKERWSDYQWAINMKRFFPRGATWDILNLAEALLEQAMIGPSPNPLILSYLKYAISSQMVSYSTVLTAISKFDDFSRDLCVQSLLEIMDMFCDRLSCHGRAEECIGLCRALMSALNWLLRCAAFYAEKVKEMLEQVAAEGQMKMCLERLEKMLSSTKNRALIHIAQLEETSSWNAVEQSLLKLEESLNGLSNSTLRSQADDCISLIKSIPTMLSVRSEQLNKTGFPTVHAVVLLEGTMNLTGEIQPLVEQLMMVKRMQRIPPPLFMLEIWKACFVGLIESPEGTEELKWTAFTFLKIPQVLVELKNYPHGDKDFTEDVNCAFEFLLKLTPLLDKADQRCNCNCMSLLLQECSKQGLLSEANMTNLTDKRKADREDAPQLQSAENANIQPNPRLILRAEPTVTNILKTMDADHSKSPEGLLGVLGHMLSGKSLDLLLAAAAATGKLKSFAWKFIKLNEFTKHISTENSKSAPVRALLFDISFLMLCHVAQTYGSEVILSESRPADEVPFFETWMLTCMPEEGKILNPDHPCFRPDSTKVESLVALLNNSSEMKLVQINWHEVCLSISAAILEILNAWENSVLTFESIQKITDNIKGKVCSMAVCAVAWLVAHVRMLGLDEREKSLQMIRQLATPLYGDNTLQFYNERVVIMSSILEHMCADVLQQTATQIKFPSTGMDTIPYWNLLPPKKPIKEVLTSVFTKVLEKGWVDSRSIHIFDSLLHMGGVYWFCNNLVKELLKETRKEHTLRAVELLYAIFCLDMQQLTLTLLGHILPNLLTDSSKWHTLMDPPGKALAKLSVWCALSSYSSHNKGQASARQKKRHREDIEDYISLFPLDDTRPSKLMRLLSSNEEDANILSSPNRSMSSSLSASQLHAVSMRDPLNRVLANLFLLISSILGSKTAGTHTQFVQWFMEECVDCLEQGSHGSILQFMPFTMVSELVKVSTMSSPKIVLAITDLGLPLGRRVAAKAIAAL.

6 consecutive short sequence motifs (LXXLL motif) follow at residues 128–132 (LNWLL), 341–345 (LTPLL), 445–449 (LDLLL), 554–558 (LVALL), 785–789 (LPNLL), and 855–859 (LMRLL).

The protein belongs to the Mediator complex subunit 24 family. Component of the Mediator complex.

The protein resides in the nucleus. In terms of biological role, component of the Mediator complex, a coactivator involved in the regulated transcription of nearly all RNA polymerase II-dependent genes. Mediator functions as a bridge to convey information from gene-specific regulatory proteins to the basal RNA polymerase II transcription machinery. Mediator is recruited to promoters by direct interactions with regulatory proteins and serves as a scaffold for the assembly of a functional preinitiation complex with RNA polymerase II and the general transcription factors. This chain is Mediator of RNA polymerase II transcription subunit 24 (MED24), found in Gallus gallus (Chicken).